A 113-amino-acid chain; its full sequence is UPF0482 protein YnfB (113 aa).

A signal peptide spans 1–28; the sequence is MNYTLSKRLCLTAMLTLAAVVYTTSAFA.

Belongs to the UPF0482 family.

The sequence is that of UPF0482 protein YnfB from Salmonella arizonae (strain ATCC BAA-731 / CDC346-86 / RSK2980).